The primary structure comprises 108 residues: Urease subunit beta (108 aa).

Belongs to the urease beta subunit family. Probable heterotrimer of UreA (gamma), UreB (beta) and UreC (alpha) subunits. Three heterotrimers associate to form the active enzyme. The trimeric urease interacts with an accessory complex composed of UreD, UreF and UreG, which is required for the assembly of the nickel containing metallocenter of UreC. The UreE protein may also play a direct role in nickel transfer to the urease apoprotein.

The protein localises to the cytoplasm. The enzyme catalyses urea + 2 H2O + H(+) = hydrogencarbonate + 2 NH4(+). The protein operates within nitrogen metabolism; urea degradation; CO(2) and NH(3) from urea (urease route): step 1/1. This Proteus mirabilis (strain HI4320) protein is Urease subunit beta.